A 214-amino-acid polypeptide reads, in one-letter code: Adenylate kinase (214 aa).

10–15 (GAGKGT) serves as a coordination point for ATP. The NMP stretch occupies residues 30–59 (STGDMLRAAVKAGTPLGLEAKKVMDAGQLV). Residues threonine 31, arginine 36, 57–59 (QLV), 85–88 (GFPR), and glutamine 92 contribute to the AMP site. The LID stretch occupies residues 122-159 (GRRVHSGSGRVYHVVFNPPKVEGKDDVTGEDLSIRPDD). Residues arginine 123 and 132–133 (VY) each bind ATP. Arginine 156 and arginine 167 together coordinate AMP. Glutamine 200 is a binding site for ATP.

This sequence belongs to the adenylate kinase family. Monomer.

It localises to the cytoplasm. The catalysed reaction is AMP + ATP = 2 ADP. Its pathway is purine metabolism; AMP biosynthesis via salvage pathway; AMP from ADP: step 1/1. Its function is as follows. Catalyzes the reversible transfer of the terminal phosphate group between ATP and AMP. Plays an important role in cellular energy homeostasis and in adenine nucleotide metabolism. This is Adenylate kinase from Shewanella frigidimarina (strain NCIMB 400).